We begin with the raw amino-acid sequence, 449 residues long: Hyaluronidase (449 aa).

The first 23 residues, 1–23 (MYHIWIKFLAAWIFLKRFNGVHV), serve as a signal peptide directing secretion. Disulfide bonds link cysteine 47–cysteine 340 and cysteine 211–cysteine 227. 3 N-linked (GlcNAc...) asparagine glycosylation sites follow: asparagine 67, asparagine 103, and asparagine 111. The active-site Proton donor is the glutamate 135. Residue asparagine 153 is glycosylated (N-linked (GlcNAc...) asparagine). The N-linked (GlcNAc...) asparagine glycan is linked to asparagine 357. Cystine bridges form between cysteine 365/cysteine 376, cysteine 370/cysteine 427, and cysteine 429/cysteine 438. Asparagine 401 carries an N-linked (GlcNAc...) asparagine glycan. The EGF-like domain maps to 427-438 (CQCYQGWKGLYC).

It belongs to the glycosyl hydrolase 56 family. As to quaternary structure, monomer. Expressed by the venom gland.

The protein localises to the secreted. The enzyme catalyses Random hydrolysis of (1-&gt;4)-linkages between N-acetyl-beta-D-glucosamine and D-glucuronate residues in hyaluronate.. Its function is as follows. Snake venom endo-hyaluronidase that degrades hyaluronan to smaller oligosaccharide fragments. In venom, it is not toxic by itself, but increases the diffusion of other venom proteins by degrading the extracellular matrix. In addition, it displays antiedematogenic activity. The chain is Hyaluronidase from Echis pyramidum leakeyi (Leakey's carpet viper).